Here is a 205-residue protein sequence, read N- to C-terminus: Ribosomal RNA small subunit methyltransferase G (205 aa).

Residues glycine 66, phenylalanine 71, 119–120 (IE), and arginine 135 each bind S-adenosyl-L-methionine.

Belongs to the methyltransferase superfamily. RNA methyltransferase RsmG family.

The protein localises to the cytoplasm. The catalysed reaction is guanosine(527) in 16S rRNA + S-adenosyl-L-methionine = N(7)-methylguanosine(527) in 16S rRNA + S-adenosyl-L-homocysteine. Its function is as follows. Specifically methylates the N7 position of guanine in position 527 of 16S rRNA. The sequence is that of Ribosomal RNA small subunit methyltransferase G from Rhizobium leguminosarum bv. trifolii (strain WSM2304).